A 1222-amino-acid polypeptide reads, in one-letter code: ATP-dependent helicase/nuclease subunit A (1222 aa).

The 457-residue stretch at 39–495 (QKRTAQQIEA…ILLKENFRSQ (457 aa)) folds into the UvrD-like helicase ATP-binding domain. 60–67 (ASAGSGKT) is a binding site for ATP. Residues 524–810 (QLIAGSHAQT…NLMTIHKSKG (287 aa)) enclose the UvrD-like helicase C-terminal domain.

It belongs to the helicase family. AddA subfamily. Heterodimer of AddA and AddB/RexB. It depends on Mg(2+) as a cofactor.

The enzyme catalyses Couples ATP hydrolysis with the unwinding of duplex DNA by translocating in the 3'-5' direction.. It catalyses the reaction ATP + H2O = ADP + phosphate + H(+). The heterodimer acts as both an ATP-dependent DNA helicase and an ATP-dependent, dual-direction single-stranded exonuclease. Recognizes the chi site generating a DNA molecule suitable for the initiation of homologous recombination. The AddA nuclease domain is required for chi fragment generation; this subunit has the helicase and 3' -&gt; 5' nuclease activities. This chain is ATP-dependent helicase/nuclease subunit A, found in Streptococcus pyogenes serotype M2 (strain MGAS10270).